Reading from the N-terminus, the 404-residue chain is Putative glutamate--cysteine ligase 2 (404 aa).

Residues Gly377–Glu404 are disordered.

The protein belongs to the glutamate--cysteine ligase type 2 family. YbdK subfamily.

It carries out the reaction L-cysteine + L-glutamate + ATP = gamma-L-glutamyl-L-cysteine + ADP + phosphate + H(+). Its function is as follows. ATP-dependent carboxylate-amine ligase which exhibits weak glutamate--cysteine ligase activity. This is Putative glutamate--cysteine ligase 2 from Pseudomonas aeruginosa (strain UCBPP-PA14).